An 837-amino-acid chain; its full sequence is Translation initiation factor IF-2 (837 aa).

2 disordered regions span residues 1-44 (MTEK…VRKS) and 62-251 (KAQE…TKPA). Basic and acidic residues-rich tracts occupy residues 62 to 102 (KAQE…EAKP) and 111 to 165 (ADPE…HNDS). The segment covering 189–205 (RENHIRTGKNKVTKAKK) has biased composition (basic residues). Over residues 206–229 (GGRDDNGSKDERSADRRNQKDMRG) the composition is skewed to basic and acidic residues. Positions 242–251 (TLQQAFTKPA) are enriched in polar residues. The tr-type G domain maps to 337-506 (QRAPVVTIMG…LLQSEVLELT (170 aa)). The G1 stretch occupies residues 346–353 (GHVDHGKT). GTP is bound at residue 346–353 (GHVDHGKT). A G2 region spans residues 371-375 (GITQH). Residues 392-395 (DTPG) form a G3 region. GTP is bound by residues 392–396 (DTPGH) and 446–449 (NKID). Residues 446–449 (NKID) are G4. The G5 stretch occupies residues 482–484 (SAK).

It belongs to the TRAFAC class translation factor GTPase superfamily. Classic translation factor GTPase family. IF-2 subfamily.

The protein resides in the cytoplasm. Its function is as follows. One of the essential components for the initiation of protein synthesis. Protects formylmethionyl-tRNA from spontaneous hydrolysis and promotes its binding to the 30S ribosomal subunits. Also involved in the hydrolysis of GTP during the formation of the 70S ribosomal complex. This is Translation initiation factor IF-2 from Actinobacillus succinogenes (strain ATCC 55618 / DSM 22257 / CCUG 43843 / 130Z).